Consider the following 362-residue polypeptide: Metacaspase-3 (362 aa).

Residues histidine 174 and cysteine 230 contribute to the active site.

The protein belongs to the peptidase C14B family.

The sequence is that of Metacaspase-3 (AMC3) from Arabidopsis thaliana (Mouse-ear cress).